The following is a 182-amino-acid chain: Isopentenyl-diphosphate Delta-isomerase (182 aa).

Mn(2+) is bound by residues His25 and His32. The Nudix hydrolase domain maps to Leu30–Met164. Cys67 is an active-site residue. Cys67 lines the Mg(2+) pocket. Position 69 (His69) interacts with Mn(2+). Glu87 is a binding site for Mg(2+). 2 residues coordinate Mn(2+): Glu114 and Glu116. Residue Glu116 is part of the active site.

It belongs to the IPP isomerase type 1 family. In terms of assembly, homodimer. The cofactor is Mg(2+). Mn(2+) serves as cofactor.

The protein resides in the cytoplasm. The enzyme catalyses isopentenyl diphosphate = dimethylallyl diphosphate. It participates in isoprenoid biosynthesis; dimethylallyl diphosphate biosynthesis; dimethylallyl diphosphate from isopentenyl diphosphate: step 1/1. Its function is as follows. Catalyzes the 1,3-allylic rearrangement of the homoallylic substrate isopentenyl (IPP) to its highly electrophilic allylic isomer, dimethylallyl diphosphate (DMAPP). The polypeptide is Isopentenyl-diphosphate Delta-isomerase (Escherichia coli O6:H1 (strain CFT073 / ATCC 700928 / UPEC)).